A 273-amino-acid chain; its full sequence is Dermonecrotic toxin SdSicTox-betaIIB1aiii (273 aa).

His-4 is a catalytic residue. 2 residues coordinate Mg(2+): Glu-24 and Asp-26. Residue His-40 is the Nucleophile of the active site. Disulfide bonds link Cys-44–Cys-50 and Cys-46–Cys-189. Residue Asp-84 coordinates Mg(2+).

The protein belongs to the arthropod phospholipase D family. Class II subfamily. The cofactor is Mg(2+). Expressed by the venom gland.

It is found in the secreted. It catalyses the reaction an N-(acyl)-sphingosylphosphocholine = an N-(acyl)-sphingosyl-1,3-cyclic phosphate + choline. The catalysed reaction is an N-(acyl)-sphingosylphosphoethanolamine = an N-(acyl)-sphingosyl-1,3-cyclic phosphate + ethanolamine. The enzyme catalyses a 1-acyl-sn-glycero-3-phosphocholine = a 1-acyl-sn-glycero-2,3-cyclic phosphate + choline. It carries out the reaction a 1-acyl-sn-glycero-3-phosphoethanolamine = a 1-acyl-sn-glycero-2,3-cyclic phosphate + ethanolamine. Dermonecrotic toxins cleave the phosphodiester linkage between the phosphate and headgroup of certain phospholipids (sphingolipid and lysolipid substrates), forming an alcohol (often choline) and a cyclic phosphate. This toxin acts on sphingomyelin (SM). It may also act on ceramide phosphoethanolamine (CPE), lysophosphatidylcholine (LPC) and lysophosphatidylethanolamine (LPE), but not on lysophosphatidylserine (LPS), and lysophosphatidylglycerol (LPG). It acts by transphosphatidylation, releasing exclusively cyclic phosphate products as second products. Induces dermonecrosis, hemolysis, increased vascular permeability, edema, inflammatory response, and platelet aggregation. This is Dermonecrotic toxin SdSicTox-betaIIB1aiii from Sicarius cf. damarensis (strain GJB-2008) (Six-eyed sand spider).